We begin with the raw amino-acid sequence, 290 residues long: Zinc finger protein-like 1 homolog (290 aa).

A B box-type; degenerate zinc finger spans residues 1-43 (MGLCKCPKRQVTTQFCFEHRVNVCENCMVVNHTKCTVQSYIQW). Residues 53-101 (CPLCGSPLDNEDCVRLICYHVFHWKCLNAKQQSLPANTAPGGHTCPTCS) form an RING-type; atypical zinc finger. The span at 156–168 (NGNTFASSMSQTR) shows a compositional bias: polar residues. The segment at 156 to 175 (NGNTFASSMSQTRSNERPES) is disordered. The chain crosses the membrane as a helical span at residues 249 to 269 (WFLVLGGCIGFVCIIYVLATL).

Belongs to the ZFPL1 family.

The protein localises to the membrane. The sequence is that of Zinc finger protein-like 1 homolog from Aedes aegypti (Yellowfever mosquito).